Consider the following 238-residue polypeptide: Ribonuclease PH (238 aa).

Residues Arg86 and 124-126 each bind phosphate; that span reads GTR.

Belongs to the RNase PH family. Homohexameric ring arranged as a trimer of dimers.

It carries out the reaction tRNA(n+1) + phosphate = tRNA(n) + a ribonucleoside 5'-diphosphate. Its function is as follows. Phosphorolytic 3'-5' exoribonuclease that plays an important role in tRNA 3'-end maturation. Removes nucleotide residues following the 3'-CCA terminus of tRNAs; can also add nucleotides to the ends of RNA molecules by using nucleoside diphosphates as substrates, but this may not be physiologically important. Probably plays a role in initiation of 16S rRNA degradation (leading to ribosome degradation) during starvation. The sequence is that of Ribonuclease PH from Mannheimia haemolytica (Pasteurella haemolytica).